A 372-amino-acid polypeptide reads, in one-letter code: DNA replication and repair protein RecF (372 aa).

30–37 (GENAQGKT) lines the ATP pocket.

This sequence belongs to the RecF family.

The protein localises to the cytoplasm. Functionally, the RecF protein is involved in DNA metabolism; it is required for DNA replication and normal SOS inducibility. RecF binds preferentially to single-stranded, linear DNA. It also seems to bind ATP. The sequence is that of DNA replication and repair protein RecF from Geobacillus kaustophilus (strain HTA426).